The chain runs to 213 residues: Alkylbase DNA glycosidase-like protein mag2 (213 aa).

15 residues coordinate DNA: lysine 53, leucine 54, serine 61, histidine 91, glycine 94, serine 96, lysine 97, lysine 99, glutamate 102, lysine 137, glycine 138, lysine 140, threonine 143, serine 163, and threonine 164.

The protein belongs to the alkylbase DNA glycosidase AlkA family.

It is found in the nucleus. Functionally, alkylbase DNA glycosidase-like protein that shows no DNA glycosylase activity for alkylated bases. The molecular role of mag2 appears to be abasic (AP) site recognition and protection, while possibly facilitating damage signaling by structurally sculpting the DNA substrate. Stimulates AP site binding to mismatch repair protein mutS. In Schizosaccharomyces pombe (strain 972 / ATCC 24843) (Fission yeast), this protein is Alkylbase DNA glycosidase-like protein mag2.